The primary structure comprises 146 residues: Deoxyuridine 5'-triphosphate nucleotidohydrolase (146 aa).

Residues 60 to 62 (RSG), asparagine 73, and 77 to 79 (VID) contribute to the substrate site.

This sequence belongs to the dUTPase family. Requires Mg(2+) as cofactor.

It carries out the reaction dUTP + H2O = dUMP + diphosphate + H(+). It participates in pyrimidine metabolism; dUMP biosynthesis; dUMP from dCTP (dUTP route): step 2/2. In terms of biological role, this enzyme is involved in nucleotide metabolism: it produces dUMP, the immediate precursor of thymidine nucleotides and it decreases the intracellular concentration of dUTP so that uracil cannot be incorporated into DNA. The polypeptide is Deoxyuridine 5'-triphosphate nucleotidohydrolase (Tropheryma whipplei (strain TW08/27) (Whipple's bacillus)).